The chain runs to 393 residues: Succinate--CoA ligase [ADP-forming] subunit beta (393 aa).

An ATP-grasp domain is found at 9 to 245; that stretch reads KMLFAQYGIP…PSQEDKCETY (237 aa). Residues Lys46, 53–55, Glu99, Ile102, and Glu107 contribute to the ATP site; that span reads GRG. 2 residues coordinate Mg(2+): Asn200 and Asp214. Substrate is bound by residues Asn265 and 322–324; that span reads GIV.

This sequence belongs to the succinate/malate CoA ligase beta subunit family. As to quaternary structure, heterotetramer of two alpha and two beta subunits. Mg(2+) serves as cofactor.

The enzyme catalyses succinate + ATP + CoA = succinyl-CoA + ADP + phosphate. It carries out the reaction GTP + succinate + CoA = succinyl-CoA + GDP + phosphate. Its pathway is carbohydrate metabolism; tricarboxylic acid cycle; succinate from succinyl-CoA (ligase route): step 1/1. Succinyl-CoA synthetase functions in the citric acid cycle (TCA), coupling the hydrolysis of succinyl-CoA to the synthesis of either ATP or GTP and thus represents the only step of substrate-level phosphorylation in the TCA. The beta subunit provides nucleotide specificity of the enzyme and binds the substrate succinate, while the binding sites for coenzyme A and phosphate are found in the alpha subunit. This Baumannia cicadellinicola subsp. Homalodisca coagulata protein is Succinate--CoA ligase [ADP-forming] subunit beta.